The following is a 977-amino-acid chain: Macrophage colony-stimulating factor 1 receptor (977 aa).

The N-terminal stretch at 1 to 18 (MFFALLFLIGILLGQVQG) is a signal peptide. Topologically, residues 19–519 (WSEPRIRLSS…MEVSDQIFTS (501 aa)) are extracellular. Ig-like C2-type domains follow at residues 22-109 (PRIR…VHVF), 120-198 (PSTS…EKVS), 213-305 (PYVY…TQLL), 316-407 (PKLS…ASIT), and 408-513 (FDIK…MEVS). Cys48 and Cys92 are disulfide-bonded. Residues Asn98, Asn101, Asn154, Asn163, Asn244, Asn286, Asn298, Asn361, Asn424, and Asn455 are each glycosylated (N-linked (GlcNAc...) asparagine). 2 disulfides stabilise this stretch: Cys138–Cys187 and Cys234–Cys289. Cysteines 430 and 495 form a disulfide. The helical transmembrane segment at 520–540 (AMCGSTVAMVVLGLLLIFMIY) threads the bilayer. The Cytoplasmic segment spans residues 541-977 (KYKQKPRYEI…LMKPNNYQFC (437 aa)). The interval 544-576 (QKPRYEIRWKIIEATNGNNYTFIDPTQLPYNEK) is regulatory juxtamembrane domain. At Tyr563 the chain carries Phosphotyrosine; by autocatalysis. Residues 584-917 (LKLGKTLGAG…KISQMIQRML (334 aa)) enclose the Protein kinase domain. ATP-binding positions include 590-598 (LGAGAFGKV) and Lys618. Phosphotyrosine; by autocatalysis occurs at positions 701 and 725. The active-site Proton acceptor is Asp781. Positions 799–821 (DFGLARDIMNDSNYVVKGNARLP) are activation loop. Phosphotyrosine; by autocatalysis is present on residues Tyr812 and Tyr929. The segment at 919–977 (ETSEQQDTQEYKNIPTEAEAEQQLESCDPVKHEDESFETSCDQEEEDQPLMKPNNYQFC) is disordered. Acidic residues predominate over residues 953-966 (ESFETSCDQEEEDQ). Tyr974 carries the post-translational modification Phosphotyrosine; by autocatalysis.

This sequence belongs to the protein kinase superfamily. Tyr protein kinase family. CSF-1/PDGF receptor subfamily. As to quaternary structure, monomer. Homodimer. Interacts with CSF1. Autophosphorylated in response to CSF1 binding. autophosphorylation, leading to its degradation. In terms of processing, ubiquitinated. Becomes rapidly polyubiquitinated after autophosphorylation, leading to its degradation.

The protein resides in the cell membrane. It carries out the reaction L-tyrosyl-[protein] + ATP = O-phospho-L-tyrosyl-[protein] + ADP + H(+). With respect to regulation, present in an inactive conformation in the absence of bound ligand. CSF1 binding leads to dimerization and activation by autophosphorylation on tyrosine residues. Functionally, tyrosine-protein kinase that acts as a cell-surface receptor for CSF1 and plays an essential role in the regulation of survival, proliferation and differentiation of hematopoietic precursor cells, especially mononuclear phagocytes, such as macrophages and monocytes. Plays an important role in innate immunity and in inflammatory processes. Plays an important role in the regulation of osteoclast proliferation and differentiation, the regulation of bone resorption, and is required for normal bone development. Promotes reorganization of the actin cytoskeleton, regulates formation of membrane ruffles, cell adhesion and cell migration. Activates several signaling pathways in response to ligand binding. The protein is Macrophage colony-stimulating factor 1 receptor (csf1r) of Danio rerio (Zebrafish).